The following is a 240-amino-acid chain: Tetrahydromethanopterin S-methyltransferase subunit A (240 aa).

Residues M1 to K218 lie on the Cytoplasmic side of the membrane. H85 provides a ligand contact to 5-hydroxybenzimidazolylcob(I)amide. Residues I219–G239 form a helical membrane-spanning segment. A topological domain (extracellular) is located at residue R240.

It belongs to the MtrA family. In terms of assembly, the complex is composed of 8 subunits; MtrA, MtrB, MtrC, MtrD, MtrE, MtrF, MtrG and MtrH. 5-hydroxybenzimidazolylcob(I)amide serves as cofactor.

It localises to the cell membrane. The enzyme catalyses 5-methyl-5,6,7,8-tetrahydromethanopterin + coenzyme M + 2 Na(+)(in) = 5,6,7,8-tetrahydromethanopterin + methyl-coenzyme M + 2 Na(+)(out). Its pathway is one-carbon metabolism; methanogenesis from CO(2); methyl-coenzyme M from 5,10-methylene-5,6,7,8-tetrahydromethanopterin: step 2/2. Its function is as follows. Part of a complex that catalyzes the formation of methyl-coenzyme M and tetrahydromethanopterin from coenzyme M and methyl-tetrahydromethanopterin. This is an energy-conserving, sodium-ion translocating step. In Methanosarcina acetivorans (strain ATCC 35395 / DSM 2834 / JCM 12185 / C2A), this protein is Tetrahydromethanopterin S-methyltransferase subunit A.